Consider the following 139-residue polypeptide: ATP synthase epsilon chain (139 aa).

It belongs to the ATPase epsilon chain family. As to quaternary structure, F-type ATPases have 2 components, CF(1) - the catalytic core - and CF(0) - the membrane proton channel. CF(1) has five subunits: alpha(3), beta(3), gamma(1), delta(1), epsilon(1). CF(0) has three main subunits: a, b and c.

It is found in the cell inner membrane. Produces ATP from ADP in the presence of a proton gradient across the membrane. The chain is ATP synthase epsilon chain from Erwinia tasmaniensis (strain DSM 17950 / CFBP 7177 / CIP 109463 / NCPPB 4357 / Et1/99).